The primary structure comprises 228 residues: Uracil-DNA glycosylase (228 aa).

The Proton acceptor role is filled by Asp-64.

Belongs to the uracil-DNA glycosylase (UDG) superfamily. UNG family.

The protein resides in the cytoplasm. It catalyses the reaction Hydrolyzes single-stranded DNA or mismatched double-stranded DNA and polynucleotides, releasing free uracil.. Excises uracil residues from the DNA which can arise as a result of misincorporation of dUMP residues by DNA polymerase or due to deamination of cytosine. This is Uracil-DNA glycosylase from Pectobacterium atrosepticum (strain SCRI 1043 / ATCC BAA-672) (Erwinia carotovora subsp. atroseptica).